The chain runs to 171 residues: ATP synthase subunit b (171 aa).

A helical transmembrane segment spans residues 3 to 23 (KFLFFIFVFVGISFAGDDTAT).

It belongs to the ATPase B chain family. In terms of assembly, F-type ATPases have 2 components, F(1) - the catalytic core - and F(0) - the membrane proton channel. F(1) has five subunits: alpha(3), beta(3), gamma(1), delta(1), epsilon(1). F(0) has three main subunits: a(1), b(2) and c(10-14). The alpha and beta chains form an alternating ring which encloses part of the gamma chain. F(1) is attached to F(0) by a central stalk formed by the gamma and epsilon chains, while a peripheral stalk is formed by the delta and b chains.

The protein localises to the cell inner membrane. In terms of biological role, f(1)F(0) ATP synthase produces ATP from ADP in the presence of a proton or sodium gradient. F-type ATPases consist of two structural domains, F(1) containing the extramembraneous catalytic core and F(0) containing the membrane proton channel, linked together by a central stalk and a peripheral stalk. During catalysis, ATP synthesis in the catalytic domain of F(1) is coupled via a rotary mechanism of the central stalk subunits to proton translocation. Functionally, component of the F(0) channel, it forms part of the peripheral stalk, linking F(1) to F(0). This Campylobacter hominis (strain ATCC BAA-381 / DSM 21671 / CCUG 45161 / LMG 19568 / NCTC 13146 / CH001A) protein is ATP synthase subunit b.